A 133-amino-acid chain; its full sequence is Probable mitochondrial pyruvate carrier 2 (133 aa).

Transmembrane regions (helical) follow at residues 39 to 55 (VTNL…IVPI), 73 to 91 (ASSL…TLIS), and 99 to 116 (MLAA…YNIY).

Belongs to the mitochondrial pyruvate carrier (MPC) (TC 2.A.105) family.

Its subcellular location is the mitochondrion inner membrane. May mediate the uptake of pyruvate into mitochondria. This chain is Probable mitochondrial pyruvate carrier 2, found in Dictyostelium discoideum (Social amoeba).